Reading from the N-terminus, the 83-residue chain is U5-theraphotoxin-Hs1a 6 (83 aa).

Positions 1 to 21 (MKTSMFLTLTGLVLLFVVCYA) are cleaved as a signal peptide. A propeptide spanning residues 22–49 (SESEEKEFPKELLSSIFAADSDFKVEER) is cleaved from the precursor. 3 cysteine pairs are disulfide-bonded: Cys-51–Cys-63, Cys-56–Cys-68, and Cys-62–Cys-75.

Belongs to the neurotoxin 10 (Hwtx-1) family. 51 (Hntx-8) subfamily. Hntx-8 sub-subfamily. In terms of tissue distribution, expressed by the venom gland.

It is found in the secreted. Agglutinates erythrocytes. The sequence is that of U5-theraphotoxin-Hs1a 6 from Cyriopagopus schmidti (Chinese bird spider).